The chain runs to 514 residues: Ammonium transporter 1 member 2 (514 aa).

11 consecutive transmembrane segments (helical) span residues 56–76 (LLFS…LCAG), 91–111 (VLDA…FAFG), 140–160 (FFLY…GSIA), 165–185 (FVAY…TVSH), 212–232 (FAGS…GALV), 257–277 (VVLG…GSFL), 291–313 (GQWS…AALT), 328–348 (IDVC…CAVV), 351–371 (WAAI…NLLA), 380–400 (LEAA…TGLF), and 431–451 (IVQI…LFYG). Position 472 is a phosphothreonine (threonine 472).

Belongs to the ammonia transporter channel (TC 1.A.11.2) family. In terms of tissue distribution, high expression in root.

It localises to the membrane. Functionally, ammonium transporter probably involved in ammonium uptake from the soil. This Arabidopsis thaliana (Mouse-ear cress) protein is Ammonium transporter 1 member 2 (AMT1-2).